The following is a 178-amino-acid chain: MINSVDLAIGTAILLIGMAYWTVSIVEHNNNYVDIVKSDYIFDKGISTMEHLSEDGTLQDAVLLYYFDRVNDSKKLLEERIPLKHYLLYIDNNLLINKSNGVNNSNSVYILTVLTLNRSEGWYVIYGNEDFVNISKERFLDYDDAYNYLKYRNYDIHMPVYLSKNVSSSRVELYILGN.

A helical membrane pass occupies residues 7–27; it reads LAIGTAILLIGMAYWTVSIVE.

Its subcellular location is the membrane. This is an uncharacterized protein from Methanocaldococcus jannaschii (strain ATCC 43067 / DSM 2661 / JAL-1 / JCM 10045 / NBRC 100440) (Methanococcus jannaschii).